Here is a 262-residue protein sequence, read N- to C-terminus: Small ribosomal subunit protein uS2 (262 aa).

It belongs to the universal ribosomal protein uS2 family.

This Rhodospirillum rubrum (strain ATCC 11170 / ATH 1.1.1 / DSM 467 / LMG 4362 / NCIMB 8255 / S1) protein is Small ribosomal subunit protein uS2.